The primary structure comprises 674 residues: Bacterioopsin transcriptional activator (674 aa).

Positions 19-131 constitute a Response regulatory domain; sequence GVLFAGSDPE…DATAAIADRI (113 aa). One can recognise a PAS domain in the interval 156–229; the sequence is ERRLKEQALD…AEFWTAITED (74 aa). The 55-residue stretch at 230 to 284 folds into the PAC domain; sequence HDTQVVLRNYRRDGSLFWNQVDISPIYDEDGTVSHYVGFQMDVSERMAAQQELQG. One can recognise a GAF domain in the interval 285 to 454; the sequence is ERQSLDRLLD…NDALTRRTIA (170 aa). The 52-residue stretch at 617–668 folds into the HTH bat-type domain; the sequence is LTDRQLTALQKAYVSGYFEWPRRAEGKQLAESMDIVPSTYHQHLQAAKQKLV.

Functionally, involved in activating bop (bacterioopsin) and brp gene expression at low-oxygen tension, which naturally occurs in stationary phase. This chain is Bacterioopsin transcriptional activator (bat), found in Halobacterium salinarum (strain ATCC 700922 / JCM 11081 / NRC-1) (Halobacterium halobium).